A 147-amino-acid polypeptide reads, in one-letter code: Transthyretin (147 aa).

The signal sequence occupies residues Met-1–Ala-20. Cys-30 is modified (sulfocysteine). Lys-35 contacts L-thyroxine. Glu-62 is subject to 4-carboxyglutamate. An L-thyroxine-binding site is contributed by Glu-74. A glycan (N-linked (GlcNAc...) asparagine) is linked at Asn-118. Ser-137 is an L-thyroxine binding site.

The protein belongs to the transthyretin family. Homotetramer. Dimer of dimers. In the homotetramer, subunits assemble around a central channel that can accommodate two ligand molecules. Interacts with RBP4. In terms of processing, sulfonation of the reactive cysteine Cys-30 enhances the stability of the native conformation of TTR, avoiding misassembly of the protein leading to amyloid formation. In terms of tissue distribution, detected in serum (at protein level). Detected in liver.

It is found in the secreted. Functionally, thyroid hormone-binding protein. Probably transports thyroxine from the bloodstream to the brain. The sequence is that of Transthyretin (TTR) from Sorex araneus (Eurasian common shrew).